A 315-amino-acid chain; its full sequence is Alpha- and gamma-adaptin-binding protein p34 (315 aa).

Residues 197–234 (IGSADPCHPEQPHLPAADSTESLSDHRGGASNTTDAQV) form a disordered region. Residues Ser310 and Ser311 each carry the phosphoserine modification.

As to quaternary structure, associated with AP-1 and AP-2 complexes. In terms of tissue distribution, widely expressed, including in skin and keratinocytes, with highest levels in adrenal gland, rectum and thymus.

It localises to the cytoplasm. The protein resides in the cytosol. May be involved in endocytic recycling of growth factor receptors such as EGFR. The polypeptide is Alpha- and gamma-adaptin-binding protein p34 (AAGAB) (Homo sapiens (Human)).